We begin with the raw amino-acid sequence, 420 residues long: Polyketide biosynthesis 3-hydroxy-3-methylglutaryl-ACP synthase PksG (420 aa).

Glu82 serves as the catalytic Proton donor/acceptor. The active-site Acyl-thioester intermediate is Cys114. His250 functions as the Proton donor/acceptor in the catalytic mechanism.

Belongs to the thiolase-like superfamily. HMG-CoA synthase family.

The protein resides in the cytoplasm. It carries out the reaction 3-oxobutanoyl-[ACP] + acetyl-[ACP] + H2O = (3S)-hydroxy-3-methylglutaryl-[ACP] + holo-[ACP] + H(+). Its pathway is antibiotic biosynthesis; bacillaene biosynthesis. In terms of biological role, involved in some intermediate steps for the synthesis of the antibiotic polyketide bacillaene which is involved in secondary metabolism. It catalyzes the aldol condensation between the acetyl group attached to the acyl-carrier-protein AcpK (Ac-AcpK) and a beta-ketothioester polyketide intermediate linked to one of the consecutive thiolation domains of PksL. In Bacillus subtilis (strain 168), this protein is Polyketide biosynthesis 3-hydroxy-3-methylglutaryl-ACP synthase PksG (pksG).